The primary structure comprises 657 residues: Probable potassium transport system protein Kup 1 (657 aa).

A run of 12 helical transmembrane segments spans residues 40-60 (VTSG…GDIG), 88-108 (VLSL…VLLL), 135-155 (WFLL…SMIT), 172-192 (PALE…LFAV), 198-218 (ALVA…IAVM), 241-261 (FLLS…LAVT), 282-302 (WMFF…ALVL), 320-340 (LVLP…QAVI), 380-400 (LLLI…NLAS), 402-422 (YGIA…VVIW), 432-452 (AAAV…ANLL), and 454-474 (LLEG…TIWT).

The protein belongs to the HAK/KUP transporter (TC 2.A.72) family.

The protein resides in the cell inner membrane. The catalysed reaction is K(+)(in) + H(+)(in) = K(+)(out) + H(+)(out). In terms of biological role, transport of potassium into the cell. Likely operates as a K(+):H(+) symporter. This chain is Probable potassium transport system protein Kup 1, found in Bradyrhizobium diazoefficiens (strain JCM 10833 / BCRC 13528 / IAM 13628 / NBRC 14792 / USDA 110).